The sequence spans 461 residues: tRNA modification GTPase MnmE (461 aa).

Arginine 27, glutamate 89, and arginine 128 together coordinate (6S)-5-formyl-5,6,7,8-tetrahydrofolate. A TrmE-type G domain is found at 224-382; sequence GLATAIVGRP…LEELINKLFF (159 aa). Asparagine 234 lines the K(+) pocket. GTP contacts are provided by residues 234-239, 253-259, and 278-281; these read NVGKSS, TDVAGTT, and DTAG. Mg(2+) is bound at residue serine 238. Residues threonine 253, valine 255, and threonine 258 each contribute to the K(+) site. Position 259 (threonine 259) interacts with Mg(2+). Lysine 461 contacts (6S)-5-formyl-5,6,7,8-tetrahydrofolate.

It belongs to the TRAFAC class TrmE-Era-EngA-EngB-Septin-like GTPase superfamily. TrmE GTPase family. Homodimer. Heterotetramer of two MnmE and two MnmG subunits. K(+) is required as a cofactor.

It is found in the cytoplasm. Its function is as follows. Exhibits a very high intrinsic GTPase hydrolysis rate. Involved in the addition of a carboxymethylaminomethyl (cmnm) group at the wobble position (U34) of certain tRNAs, forming tRNA-cmnm(5)s(2)U34. The polypeptide is tRNA modification GTPase MnmE (Lactobacillus helveticus (strain DPC 4571)).